Reading from the N-terminus, the 403-residue chain is GPI-N-acetylgalactosamine transferase PGAP4 (403 aa).

At 1–22 (MSTSTSPAAMLLRRLRRLSWGS) the chain is on the cytoplasmic side. The chain crosses the membrane as a helical span at residues 23–43 (TAVQLFILTVVTFGLLAPLAC). The Lumenal portion of the chain corresponds to 44 to 259 (HRLLHSYFYL…RLQHYINPEP (216 aa)). The N-linked (GalNAc...) asparagine glycan is linked to asparagine 87. Residue valine 109 coordinates UDP-N-acetyl-alpha-D-galactosamine. 2 disulfides stabilise this stretch: cysteine 132-cysteine 136 and cysteine 144-cysteine 194. A DXD motif motif is present at residues 211 to 213 (EDD). The helical transmembrane segment at 260–280 (MRILEWVGVGMLLGPLLTWIY) threads the bilayer. Residues 281–287 (MRFASRP) are Cytoplasmic-facing. The chain crosses the membrane as a helical span at residues 288–308 (GFSWPVMLFFSLYSMGLVELV). At 309 to 403 (GRHYFLELRR…LRYNFHPSLL (95 aa)) the chain is on the lumenal side. A disulfide bridge links cysteine 332 with cysteine 333. Threonine 334, proline 335, and lysine 362 together coordinate UDP-N-acetyl-alpha-D-galactosamine.

This sequence belongs to the PGAP4 family. Glycosylated.

The protein localises to the golgi apparatus membrane. Golgi-resident glycosylphosphatidylinositol (GPI)-N-acetylgalactosamine transferase that catalyzes the N-acetyl-beta-D-galactosamine transfer from an UDP-N-acetyl-alpha-D-galactosamine to the 4-OH-position of the first mannose of the glycosylphosphatidylinositol (GPI) of a GPI-anchored protein (GPI-AP). This modification occurs after the fatty acid remodeling step of the GPI-anchor maturation. This chain is GPI-N-acetylgalactosamine transferase PGAP4, found in Homo sapiens (Human).